A 118-amino-acid polypeptide reads, in one-letter code: MKFQPLGERVLVERLEEENKTSSGIIIPDNAKEKPLMGVVKAVSHKISEGCKCVKEGDVIAFGKYKGAEIVLDGTEYMVLELEDILGIVGSGSCCHTGNHDHKHAKEHEACCHDHKKH.

It belongs to the GroES chaperonin family. In terms of assembly, heptamer of 7 subunits arranged in a ring. Interacts with the chaperonin GroEL.

The protein localises to the cytoplasm. Together with the chaperonin GroEL, plays an essential role in assisting protein folding. The GroEL-GroES system forms a nano-cage that allows encapsulation of the non-native substrate proteins and provides a physical environment optimized to promote and accelerate protein folding. GroES binds to the apical surface of the GroEL ring, thereby capping the opening of the GroEL channel. The protein is Co-chaperonin GroES of Helicobacter pylori (strain HPAG1).